The sequence spans 32 residues: ADPTPVSVSGGTIHFEGKLVNAAAXVSXXSAD.

The protein localises to the fimbrium. This Salmonella enteritidis protein is Fimbrin sef21.